The chain runs to 209 residues: D-aminoacyl-tRNA deacylase 1 (209 aa).

Mg(2+)-binding residues include Val-4, Gln-6, and Cys-28. The Gly-cisPro motif, important for rejection of L-amino acids motif lies at 139-140 (GP). The interval 142–209 (TIELESPAPG…EGDVSSEREP (68 aa)) is disordered. Basic and acidic residues-rich tracts occupy residues 159 to 170 (QLSKLEKQQQRK) and 181 to 194 (SSKE…EDRS). Phosphoserine is present on residues Ser-197, Ser-204, and Ser-205.

This sequence belongs to the DTD family. In terms of assembly, homodimer. Interacts with CDC45 and TOPBP1. Preferentially phosphorylated in cells arrested early in S phase. Phosphorylation in the C-terminus weakens the interaction with CDC45. Expressed in many adult and fetal tissues. Highest levels in testis, ovary, spleen and in adult and fetal brain.

Its subcellular location is the nucleus. The protein resides in the cytoplasm. It catalyses the reaction glycyl-tRNA(Ala) + H2O = tRNA(Ala) + glycine + H(+). The enzyme catalyses a D-aminoacyl-tRNA + H2O = a tRNA + a D-alpha-amino acid + H(+). Possible ATPase involved in DNA replication, may facilitate loading of CDC45 onto pre-replication complexes. Functionally, an aminoacyl-tRNA editing enzyme that deacylates mischarged D-aminoacyl-tRNAs. Also deacylates mischarged glycyl-tRNA(Ala), protecting cells against glycine mischarging by AlaRS. Acts via tRNA-based rather than protein-based catalysis; rejects L-amino acids rather than detecting D-amino acids in the active site. By recycling D-aminoacyl-tRNA to D-amino acids and free tRNA molecules, this enzyme counteracts the toxicity associated with the formation of D-aminoacyl-tRNA entities in vivo and helps enforce protein L-homochirality. This Homo sapiens (Human) protein is D-aminoacyl-tRNA deacylase 1 (DTD1).